Reading from the N-terminus, the 38-residue chain is Photosystem II reaction center protein L (38 aa).

The helical transmembrane segment at 17–37 (SLYWGLLLIFVLAVLFSNYFF) threads the bilayer.

This sequence belongs to the PsbL family. As to quaternary structure, PSII is composed of 1 copy each of membrane proteins PsbA, PsbB, PsbC, PsbD, PsbE, PsbF, PsbH, PsbI, PsbJ, PsbK, PsbL, PsbM, PsbT, PsbX, PsbY, PsbZ, Psb30/Ycf12, at least 3 peripheral proteins of the oxygen-evolving complex and a large number of cofactors. It forms dimeric complexes.

The protein localises to the plastid. The protein resides in the chloroplast thylakoid membrane. Its function is as follows. One of the components of the core complex of photosystem II (PSII). PSII is a light-driven water:plastoquinone oxidoreductase that uses light energy to abstract electrons from H(2)O, generating O(2) and a proton gradient subsequently used for ATP formation. It consists of a core antenna complex that captures photons, and an electron transfer chain that converts photonic excitation into a charge separation. This subunit is found at the monomer-monomer interface and is required for correct PSII assembly and/or dimerization. This is Photosystem II reaction center protein L from Huperzia lucidula (Shining clubmoss).